Consider the following 142-residue polypeptide: Large ribosomal subunit protein uL13 (142 aa).

This sequence belongs to the universal ribosomal protein uL13 family. As to quaternary structure, part of the 50S ribosomal subunit.

In terms of biological role, this protein is one of the early assembly proteins of the 50S ribosomal subunit, although it is not seen to bind rRNA by itself. It is important during the early stages of 50S assembly. The chain is Large ribosomal subunit protein uL13 from Shigella dysenteriae serotype 1 (strain Sd197).